The primary structure comprises 365 residues: Snurportin-1 (365 aa).

The region spanning G10–V72 is the IBB domain. 2 disordered regions span residues A15–G34 and W69–V90. A compositionally biased stretch (acidic residues) spans E73–V90. The interaction with m3G-cap structure stretch occupies residues G129–R131. A necessary for binding to the m3G-cap structure region spans residues L211–A333. The interval R317–N365 is disordered. A compositionally biased stretch (polar residues) spans S345–G355.

Belongs to the snurportin family.

It localises to the nucleus. It is found in the cytoplasm. Functions as an U snRNP-specific nuclear import adapter. Involved in the trimethylguanosine (m3G)-cap-dependent nuclear import of U snRNPs. Binds specifically to the terminal m3G-cap U snRNAs. The protein is Snurportin-1 (SNUPN) of Gallus gallus (Chicken).